Here is a 383-residue protein sequence, read N- to C-terminus: TnpB-like protein ORF383B (383 aa).

4 residues coordinate Zn(2+): cysteine 328, cysteine 331, cysteine 345, and cysteine 348.

It in the N-terminal section; belongs to the transposase 2 family. The protein in the C-terminal section; belongs to the transposase 35 family.

The polypeptide is TnpB-like protein ORF383B (Acidianus convivator (ATV)).